The sequence spans 345 residues: N-acetyl-gamma-glutamyl-phosphate reductase (345 aa).

The active site involves C149.

This sequence belongs to the NAGSA dehydrogenase family. Type 1 subfamily.

The protein resides in the cytoplasm. The catalysed reaction is N-acetyl-L-glutamate 5-semialdehyde + phosphate + NADP(+) = N-acetyl-L-glutamyl 5-phosphate + NADPH + H(+). It functions in the pathway amino-acid biosynthesis; L-arginine biosynthesis; N(2)-acetyl-L-ornithine from L-glutamate: step 3/4. In terms of biological role, catalyzes the NADPH-dependent reduction of N-acetyl-5-glutamyl phosphate to yield N-acetyl-L-glutamate 5-semialdehyde. The chain is N-acetyl-gamma-glutamyl-phosphate reductase from Halalkalibacterium halodurans (strain ATCC BAA-125 / DSM 18197 / FERM 7344 / JCM 9153 / C-125) (Bacillus halodurans).